A 428-amino-acid polypeptide reads, in one-letter code: Glutamate-1-semialdehyde 2,1-aminomutase 2 (428 aa).

Lys-267 carries the N6-(pyridoxal phosphate)lysine modification.

It belongs to the class-III pyridoxal-phosphate-dependent aminotransferase family. HemL subfamily. Homodimer. Pyridoxal 5'-phosphate is required as a cofactor.

The protein localises to the cytoplasm. The enzyme catalyses (S)-4-amino-5-oxopentanoate = 5-aminolevulinate. The protein operates within porphyrin-containing compound metabolism; protoporphyrin-IX biosynthesis; 5-aminolevulinate from L-glutamyl-tRNA(Glu): step 2/2. This is Glutamate-1-semialdehyde 2,1-aminomutase 2 from Oceanobacillus iheyensis (strain DSM 14371 / CIP 107618 / JCM 11309 / KCTC 3954 / HTE831).